The primary structure comprises 253 residues: Imidazole glycerol phosphate synthase subunit HisF (253 aa).

Active-site residues include D11 and D130.

Belongs to the HisA/HisF family. In terms of assembly, heterodimer of HisH and HisF.

It localises to the cytoplasm. It catalyses the reaction 5-[(5-phospho-1-deoxy-D-ribulos-1-ylimino)methylamino]-1-(5-phospho-beta-D-ribosyl)imidazole-4-carboxamide + L-glutamine = D-erythro-1-(imidazol-4-yl)glycerol 3-phosphate + 5-amino-1-(5-phospho-beta-D-ribosyl)imidazole-4-carboxamide + L-glutamate + H(+). The protein operates within amino-acid biosynthesis; L-histidine biosynthesis; L-histidine from 5-phospho-alpha-D-ribose 1-diphosphate: step 5/9. Functionally, IGPS catalyzes the conversion of PRFAR and glutamine to IGP, AICAR and glutamate. The HisF subunit catalyzes the cyclization activity that produces IGP and AICAR from PRFAR using the ammonia provided by the HisH subunit. The protein is Imidazole glycerol phosphate synthase subunit HisF of Acidithiobacillus ferrooxidans (strain ATCC 23270 / DSM 14882 / CIP 104768 / NCIMB 8455) (Ferrobacillus ferrooxidans (strain ATCC 23270)).